Reading from the N-terminus, the 410-residue chain is UPF0761 membrane protein Csal_1895 (410 aa).

Helical transmembrane passes span 43 to 63 (LFAVVPFMTVLYAMLSAIPSF), 99 to 119 (SLTLIGLMFLLVTAVMMMVTV), 139 to 159 (FLLYWAVLTLGPLLLGSGFLL), 180 to 200 (VAFLRLLPLTLSFTAFVFIYM), 212 to 232 (AVAGAGLAALALELAKGAFSL), and 247 to 267 (FAAVPLFLVWVFLSWAIVLVG).

Belongs to the UPF0761 family.

The protein localises to the cell inner membrane. The sequence is that of UPF0761 membrane protein Csal_1895 from Chromohalobacter salexigens (strain ATCC BAA-138 / DSM 3043 / CIP 106854 / NCIMB 13768 / 1H11).